The primary structure comprises 546 residues: Chaperonin GroEL (546 aa).

ATP contacts are provided by residues 30 to 33 (TLGP), lysine 51, 87 to 91 (DGTTT), glycine 415, 479 to 481 (NAA), and aspartate 495.

Belongs to the chaperonin (HSP60) family. As to quaternary structure, forms a cylinder of 14 subunits composed of two heptameric rings stacked back-to-back. Interacts with the co-chaperonin GroES.

The protein resides in the cytoplasm. The catalysed reaction is ATP + H2O + a folded polypeptide = ADP + phosphate + an unfolded polypeptide.. In terms of biological role, together with its co-chaperonin GroES, plays an essential role in assisting protein folding. The GroEL-GroES system forms a nano-cage that allows encapsulation of the non-native substrate proteins and provides a physical environment optimized to promote and accelerate protein folding. The protein is Chaperonin GroEL of Allochromatium vinosum (Chromatium vinosum).